We begin with the raw amino-acid sequence, 265 residues long: Molybdenum-pterin-binding protein MopA (265 aa).

2 consecutive Mop domains span residues 126–192 (RTSN…MLAA) and 198–264 (RISA…ILAM).

The protein belongs to the ModE family.

The polypeptide is Molybdenum-pterin-binding protein MopA (mopA) (Rhodobacter capsulatus (Rhodopseudomonas capsulata)).